We begin with the raw amino-acid sequence, 359 residues long: 4-hydroxy-3-methylbut-2-en-1-yl diphosphate synthase (flavodoxin) (359 aa).

Cys264, Cys267, Cys299, and Glu306 together coordinate [4Fe-4S] cluster.

The protein belongs to the IspG family. [4Fe-4S] cluster is required as a cofactor.

The enzyme catalyses (2E)-4-hydroxy-3-methylbut-2-enyl diphosphate + oxidized [flavodoxin] + H2O + 2 H(+) = 2-C-methyl-D-erythritol 2,4-cyclic diphosphate + reduced [flavodoxin]. Its pathway is isoprenoid biosynthesis; isopentenyl diphosphate biosynthesis via DXP pathway; isopentenyl diphosphate from 1-deoxy-D-xylulose 5-phosphate: step 5/6. In terms of biological role, converts 2C-methyl-D-erythritol 2,4-cyclodiphosphate (ME-2,4cPP) into 1-hydroxy-2-methyl-2-(E)-butenyl 4-diphosphate. This Helicobacter pylori (strain P12) protein is 4-hydroxy-3-methylbut-2-en-1-yl diphosphate synthase (flavodoxin).